The primary structure comprises 475 residues: Ornithine aminotransferase, mitochondrial (475 aa).

The transit peptide at 1 to 16 (MAATTRRLLYYVSKRF) directs the protein to the mitochondrion. Residues 23 to 43 (RSYGGLPQSNSKSPPSSSQRL) are disordered. Low complexity predominate over residues 29 to 41 (PQSNSKSPPSSSQ). Pyridoxal 5'-phosphate contacts are provided by residues 142–143 (GA) and phenylalanine 177. Position 180 (arginine 180) interacts with L-ornithine. 265–268 (DEVQ) contributes to the pyridoxal 5'-phosphate binding site. N6-(pyridoxal phosphate)lysine is present on lysine 294. L-ornithine is bound at residue serine 323. Threonine 324 serves as a coordination point for pyridoxal 5'-phosphate.

The protein belongs to the class-III pyridoxal-phosphate-dependent aminotransferase family. As to quaternary structure, homotetramer. Pyridoxal 5'-phosphate is required as a cofactor.

The protein resides in the mitochondrion matrix. It catalyses the reaction a 2-oxocarboxylate + L-ornithine = L-glutamate 5-semialdehyde + an L-alpha-amino acid. Its pathway is amino-acid biosynthesis; L-proline biosynthesis; L-glutamate 5-semialdehyde from L-ornithine: step 1/1. Its function is as follows. Mediates degradation of arginine for nitrogen recycling. Plays a role in non-host disease resistance by regulating pyrroline-5-carboxylate metabolism-induced hypersensitive response. This Arabidopsis thaliana (Mouse-ear cress) protein is Ornithine aminotransferase, mitochondrial.